A 142-amino-acid chain; its full sequence is Mitochondrial import receptor subunit TOM22 homolog (142 aa).

A compositionally biased stretch (low complexity) spans 1–11 (MAAAVAAAGAG). Residues 1–40 (MAAAVAAAGAGEPLSPEELVPKAEAEKAEEDLEEDDDDEL) form a disordered region. A2 bears the N-acetylalanine mark. Over 2-82 (AAAVAAAGAG…VAQKMYRFSR (81 aa)) the chain is Cytoplasmic. S15 bears the Phosphoserine mark. The span at 27–40 (KAEEDLEEDDDDEL) shows a compositional bias: acidic residues. The segment at 41–50 (DETLSERLWG) is import sequence; necessary for mitochondrion outer membrane localization and integration in the TOM complex. T43 is modified (phosphothreonine). S45 is modified (phosphoserine). Residues 83 to 103 (AALWIGTTSFMILVLPVVFET) form a helical membrane-spanning segment. Residues 83 to 103 (AALWIGTTSFMILVLPVVFET) are TMD; necessary for mitochondrion outer membrane localization and integration in the TOM complex. Over 104–142 (EKLQMEQQQQLQQRQILLGPNTGLSGGMPGALPPLPGKI) the chain is Mitochondrial intermembrane. Positions 123-142 (PNTGLSGGMPGALPPLPGKI) are C-tail signal; necessary for mitochondrion outer membrane localization and integration in the TOM complex.

This sequence belongs to the Tom22 family. In terms of assembly, forms part of the preprotein translocase complex of the outer mitochondrial membrane (TOM complex) which consists of at least 7 different proteins (TOMM5, TOMM6, TOMM7, TOMM20, TOMM22, TOMM40 and TOMM70). Interacts with TOMM40. Interacts with PPP2R2B.

Its subcellular location is the mitochondrion outer membrane. Functionally, central receptor component of the translocase of the outer membrane of mitochondria (TOM complex) responsible for the recognition and translocation of cytosolically synthesized mitochondrial preproteins. Together with the peripheral receptor TOM20 functions as the transit peptide receptor and facilitates the movement of preproteins into the translocation pore. Required for the translocation across the mitochondrial outer membrane of cytochrome P450 monooxygenases. In Rattus norvegicus (Rat), this protein is Mitochondrial import receptor subunit TOM22 homolog (Tomm22).